A 138-amino-acid chain; its full sequence is MLIPRRVKHRKQHHPGRSGQATGGTKVSFGEYGIQALTPAYVTNRQIESARIAMTRHIKRGGKVWINIYPDRPLTKKPAETRMGSGKGSPEWWIANVKPGRVLFELSGVNEEVAREALRLAIHKLPLKARIVRREGGE.

Residues 1-16 (MLIPRRVKHRKQHHPG) show a composition bias toward basic residues. The interval 1–25 (MLIPRRVKHRKQHHPGRSGQATGGT) is disordered.

It belongs to the universal ribosomal protein uL16 family. Part of the 50S ribosomal subunit.

Binds 23S rRNA and is also seen to make contacts with the A and possibly P site tRNAs. This chain is Large ribosomal subunit protein uL16, found in Renibacterium salmoninarum (strain ATCC 33209 / DSM 20767 / JCM 11484 / NBRC 15589 / NCIMB 2235).